The chain runs to 196 residues: Holliday junction branch migration complex subunit RuvA (196 aa).

Residues 1–61 (MYEYFEGIVT…DTGITLYGFQ (61 aa)) are domain I. Residues 62–140 (SEDDKGLFLK…DYVARLDRQD (79 aa)) are domain II. The segment at 141-149 (EEQGNISPA) is flexible linker. The tract at residues 149 to 196 (ALNDALLALIALGYTQKEVDRITTKLEEVNADTADQYIKKGLALLLKK) is domain III.

Belongs to the RuvA family. In terms of assembly, homotetramer. Forms an RuvA(8)-RuvB(12)-Holliday junction (HJ) complex. HJ DNA is sandwiched between 2 RuvA tetramers; dsDNA enters through RuvA and exits via RuvB. An RuvB hexamer assembles on each DNA strand where it exits the tetramer. Each RuvB hexamer is contacted by two RuvA subunits (via domain III) on 2 adjacent RuvB subunits; this complex drives branch migration. In the full resolvosome a probable DNA-RuvA(4)-RuvB(12)-RuvC(2) complex forms which resolves the HJ.

It localises to the cytoplasm. Functionally, the RuvA-RuvB-RuvC complex processes Holliday junction (HJ) DNA during genetic recombination and DNA repair, while the RuvA-RuvB complex plays an important role in the rescue of blocked DNA replication forks via replication fork reversal (RFR). RuvA specifically binds to HJ cruciform DNA, conferring on it an open structure. The RuvB hexamer acts as an ATP-dependent pump, pulling dsDNA into and through the RuvAB complex. HJ branch migration allows RuvC to scan DNA until it finds its consensus sequence, where it cleaves and resolves the cruciform DNA. The sequence is that of Holliday junction branch migration complex subunit RuvA from Lactobacillus helveticus (strain DPC 4571).